An 86-amino-acid chain; its full sequence is Acyl carrier protein (86 aa).

The region spanning 10-85 is the Carrier domain; sequence DKIEQKVIEM…DVIKYIKERQ (76 aa). The residue at position 45 (S45) is an O-(pantetheine 4'-phosphoryl)serine.

The protein belongs to the acyl carrier protein (ACP) family. Post-translationally, 4'-phosphopantetheine is transferred from CoA to a specific serine of apo-ACP by AcpS. This modification is essential for activity because fatty acids are bound in thioester linkage to the sulfhydryl of the prosthetic group.

Its subcellular location is the cytoplasm. Its pathway is lipid metabolism; fatty acid biosynthesis. Carrier of the growing fatty acid chain in fatty acid biosynthesis. This chain is Acyl carrier protein, found in Rickettsia prowazekii (strain Madrid E).